The sequence spans 260 residues: Type III pantothenate kinase (260 aa).

6-13 (DAGNTRIK) serves as a coordination point for ATP. Residues Tyr-100 and 107 to 110 (GADR) each bind substrate. Residue Asp-109 is the Proton acceptor of the active site. ATP is bound at residue Thr-133. Thr-186 lines the substrate pocket.

The protein belongs to the type III pantothenate kinase family. In terms of assembly, homodimer. Requires NH4(+) as cofactor. K(+) is required as a cofactor.

It localises to the cytoplasm. The catalysed reaction is (R)-pantothenate + ATP = (R)-4'-phosphopantothenate + ADP + H(+). The protein operates within cofactor biosynthesis; coenzyme A biosynthesis; CoA from (R)-pantothenate: step 1/5. Functionally, catalyzes the phosphorylation of pantothenate (Pan), the first step in CoA biosynthesis. This Janthinobacterium sp. (strain Marseille) (Minibacterium massiliensis) protein is Type III pantothenate kinase.